Here is a 315-residue protein sequence, read N- to C-terminus: Nucleotide-binding protein PsycPRwf_2129 (315 aa).

An ATP-binding site is contributed by 29 to 36 (GRSGSGKT). 79–82 (DIRT) is a binding site for GTP.

The protein belongs to the RapZ-like family.

Its function is as follows. Displays ATPase and GTPase activities. This is Nucleotide-binding protein PsycPRwf_2129 from Psychrobacter sp. (strain PRwf-1).